An 884-amino-acid polypeptide reads, in one-letter code: Probable inorganic carbon transporter subunit DabA (884 aa).

4 residues coordinate Zn(2+): Cys390, Asp392, His582, and Cys597.

It belongs to the inorganic carbon transporter (TC 9.A.2) DabA family. In terms of assembly, forms a complex with DabB. The cofactor is Zn(2+).

Its subcellular location is the cell membrane. Functionally, part of an energy-coupled inorganic carbon pump. The chain is Probable inorganic carbon transporter subunit DabA from Staphylococcus saprophyticus subsp. saprophyticus (strain ATCC 15305 / DSM 20229 / NCIMB 8711 / NCTC 7292 / S-41).